Consider the following 237-residue polypeptide: Sugar fermentation stimulation protein homolog (237 aa).

The protein belongs to the SfsA family.

The protein is Sugar fermentation stimulation protein homolog of Pseudomonas putida (strain ATCC 47054 / DSM 6125 / CFBP 8728 / NCIMB 11950 / KT2440).